Consider the following 241-residue polypeptide: Carboxy-S-adenosyl-L-methionine synthase (241 aa).

S-adenosyl-L-methionine-binding positions include Tyr38, 63–65 (GCS), 88–89 (DN), 116–117 (DI), Asn131, and Arg198.

Belongs to the class I-like SAM-binding methyltransferase superfamily. Cx-SAM synthase family. Homodimer.

It carries out the reaction prephenate + S-adenosyl-L-methionine = carboxy-S-adenosyl-L-methionine + 3-phenylpyruvate + H2O. In terms of biological role, catalyzes the conversion of S-adenosyl-L-methionine (SAM) to carboxy-S-adenosyl-L-methionine (Cx-SAM). The sequence is that of Carboxy-S-adenosyl-L-methionine synthase from Glaesserella parasuis serovar 5 (strain SH0165) (Haemophilus parasuis).